A 96-amino-acid chain; its full sequence is UPF0235 protein VV2877 (96 aa).

This sequence belongs to the UPF0235 family.

This Vibrio vulnificus (strain YJ016) protein is UPF0235 protein VV2877.